We begin with the raw amino-acid sequence, 169 residues long: Endoribonuclease YbeY (169 aa).

Positions 117, 121, and 127 each coordinate Zn(2+).

The protein belongs to the endoribonuclease YbeY family. It depends on Zn(2+) as a cofactor.

The protein localises to the cytoplasm. Its function is as follows. Single strand-specific metallo-endoribonuclease involved in late-stage 70S ribosome quality control and in maturation of the 3' terminus of the 16S rRNA. The protein is Endoribonuclease YbeY of Mesoplasma florum (strain ATCC 33453 / NBRC 100688 / NCTC 11704 / L1) (Acholeplasma florum).